Consider the following 203-residue polypeptide: Holliday junction branch migration complex subunit RuvA (203 aa).

The segment at 1 to 65 (MIAYIHGKLL…EDAFDLYGFP (65 aa)) is domain I. The domain II stretch occupies residues 66–144 (CFDDREVFRT…TLKSATVRSG (79 aa)). Residues 145 to 155 (ACPVEGDRSEF) are flexible linker. Positions 155–203 (FLDALSGLRNLGYGDDEVRDFLKDIFDEEPDLDAGGAIRVALKKISQNK) are domain III.

This sequence belongs to the RuvA family. As to quaternary structure, homotetramer. Forms an RuvA(8)-RuvB(12)-Holliday junction (HJ) complex. HJ DNA is sandwiched between 2 RuvA tetramers; dsDNA enters through RuvA and exits via RuvB. An RuvB hexamer assembles on each DNA strand where it exits the tetramer. Each RuvB hexamer is contacted by two RuvA subunits (via domain III) on 2 adjacent RuvB subunits; this complex drives branch migration. In the full resolvosome a probable DNA-RuvA(4)-RuvB(12)-RuvC(2) complex forms which resolves the HJ.

It is found in the cytoplasm. Its function is as follows. The RuvA-RuvB-RuvC complex processes Holliday junction (HJ) DNA during genetic recombination and DNA repair, while the RuvA-RuvB complex plays an important role in the rescue of blocked DNA replication forks via replication fork reversal (RFR). RuvA specifically binds to HJ cruciform DNA, conferring on it an open structure. The RuvB hexamer acts as an ATP-dependent pump, pulling dsDNA into and through the RuvAB complex. HJ branch migration allows RuvC to scan DNA until it finds its consensus sequence, where it cleaves and resolves the cruciform DNA. The polypeptide is Holliday junction branch migration complex subunit RuvA (Maridesulfovibrio salexigens (strain ATCC 14822 / DSM 2638 / NCIMB 8403 / VKM B-1763) (Desulfovibrio salexigens)).